Consider the following 156-residue polypeptide: SsrA-binding protein (156 aa).

Belongs to the SmpB family.

The protein localises to the cytoplasm. Functionally, required for rescue of stalled ribosomes mediated by trans-translation. Binds to transfer-messenger RNA (tmRNA), required for stable association of tmRNA with ribosomes. tmRNA and SmpB together mimic tRNA shape, replacing the anticodon stem-loop with SmpB. tmRNA is encoded by the ssrA gene; the 2 termini fold to resemble tRNA(Ala) and it encodes a 'tag peptide', a short internal open reading frame. During trans-translation Ala-aminoacylated tmRNA acts like a tRNA, entering the A-site of stalled ribosomes, displacing the stalled mRNA. The ribosome then switches to translate the ORF on the tmRNA; the nascent peptide is terminated with the 'tag peptide' encoded by the tmRNA and targeted for degradation. The ribosome is freed to recommence translation, which seems to be the essential function of trans-translation. This chain is SsrA-binding protein, found in Trichodesmium erythraeum (strain IMS101).